Consider the following 389-residue polypeptide: Probable tRNA pseudouridine synthase D 1 (389 aa).

Residue D63 is the Nucleophile of the active site. Residues 135-345 form the TRUD domain; it reads GAPNYYDDQR…KYTKRPIISI (211 aa).

It belongs to the pseudouridine synthase TruD family.

The catalysed reaction is uridine(13) in tRNA = pseudouridine(13) in tRNA. In terms of biological role, could be responsible for synthesis of pseudouridine from uracil-13 in transfer RNAs. This is Probable tRNA pseudouridine synthase D 1 (truD1) from Methanococcus maripaludis (strain DSM 14266 / JCM 13030 / NBRC 101832 / S2 / LL).